The primary structure comprises 152 residues: MQYTRTVEALKQGTVIDHIPAGEGVKILRLFKLTETGERVTVGLNLVSRHMGSKDLIKVENVALTEEQANELALFAPKATVNVIDNFEVVKKHKLTLPDAVEGIFSCPNSNCISHNEPVKSVFYVKTLAHDTKMKCKYCEKVFSRDIVAEVR.

Zn(2+) contacts are provided by Cys-107, Cys-112, Cys-136, and Cys-139.

Belongs to the PyrI family. As to quaternary structure, contains catalytic and regulatory chains. Zn(2+) is required as a cofactor.

In terms of biological role, involved in allosteric regulation of aspartate carbamoyltransferase. In Chromobacterium violaceum (strain ATCC 12472 / DSM 30191 / JCM 1249 / CCUG 213 / NBRC 12614 / NCIMB 9131 / NCTC 9757 / MK), this protein is Aspartate carbamoyltransferase regulatory chain.